Here is a 495-residue protein sequence, read N- to C-terminus: Aspartyl/glutamyl-tRNA(Asn/Gln) amidotransferase subunit B (495 aa).

The protein belongs to the GatB/GatE family. GatB subfamily. As to quaternary structure, heterotrimer of A, B and C subunits.

The enzyme catalyses L-glutamyl-tRNA(Gln) + L-glutamine + ATP + H2O = L-glutaminyl-tRNA(Gln) + L-glutamate + ADP + phosphate + H(+). The catalysed reaction is L-aspartyl-tRNA(Asn) + L-glutamine + ATP + H2O = L-asparaginyl-tRNA(Asn) + L-glutamate + ADP + phosphate + 2 H(+). In terms of biological role, allows the formation of correctly charged Asn-tRNA(Asn) or Gln-tRNA(Gln) through the transamidation of misacylated Asp-tRNA(Asn) or Glu-tRNA(Gln) in organisms which lack either or both of asparaginyl-tRNA or glutaminyl-tRNA synthetases. The reaction takes place in the presence of glutamine and ATP through an activated phospho-Asp-tRNA(Asn) or phospho-Glu-tRNA(Gln). In Methanosarcina barkeri (strain Fusaro / DSM 804), this protein is Aspartyl/glutamyl-tRNA(Asn/Gln) amidotransferase subunit B.